Consider the following 147-residue polypeptide: 3-dehydroquinate dehydratase (147 aa).

The active-site Proton acceptor is the Tyr25. Substrate is bound by residues Asn76, His82, and Asp89. His102 serves as the catalytic Proton donor. Substrate is bound by residues 103–104 and Arg113; that span reads IS.

This sequence belongs to the type-II 3-dehydroquinase family. As to quaternary structure, homododecamer.

It carries out the reaction 3-dehydroquinate = 3-dehydroshikimate + H2O. Its pathway is metabolic intermediate biosynthesis; chorismate biosynthesis; chorismate from D-erythrose 4-phosphate and phosphoenolpyruvate: step 3/7. Its function is as follows. Catalyzes a trans-dehydration via an enolate intermediate. In Mycobacterium tuberculosis (strain ATCC 25177 / H37Ra), this protein is 3-dehydroquinate dehydratase.